Reading from the N-terminus, the 248-residue chain is uncharacterized protein (248 aa).

The chain crosses the membrane as a helical span at residues 104-122 (CDVAACVGATWIAGGFAGA).

The protein localises to the membrane. This is an uncharacterized protein from Escherichia coli (strain K12).